A 290-amino-acid polypeptide reads, in one-letter code: Protease HtpX homolog (290 aa).

Helical transmembrane passes span 4–24 (ILLFVLTNVMVVAVLGIVASL) and 39–59 (TALLGFALVMGFGGAIISLLI). Position 144 (H144) interacts with Zn(2+). The active site involves E145. Position 148 (H148) interacts with Zn(2+). The next 2 helical transmembrane spans lie at 159 to 179 (LIQGVMNTFVVFLSRVIGYAV) and 199 to 219 (VSTIVLDIVLGFAAAIVVAWF). A Zn(2+)-binding site is contributed by E224.

This sequence belongs to the peptidase M48B family. Zn(2+) is required as a cofactor.

The protein localises to the cell inner membrane. This chain is Protease HtpX homolog, found in Variovorax paradoxus (strain S110).